The primary structure comprises 102 residues: Acid shock protein (102 aa).

The N-terminal stretch at methionine 1 to alanine 21 is a signal peptide. Residues alanine 22–lysine 41 show a composition bias toward low complexity. A propeptide spanning residues alanine 22–glutamine 58 is cleaved from the precursor. A disordered region spans residues alanine 22–alanine 102. Basic residues predominate over residues alanine 80 to histidine 90. Residues glutamine 91 to alanine 102 are compositionally biased toward low complexity.

It belongs to the Asr family. In terms of processing, proteolytic processing gives rise to the active protein.

The protein resides in the periplasm. In terms of biological role, required for growth and/or survival at acidic conditions. This is Acid shock protein from Escherichia coli O127:H6 (strain E2348/69 / EPEC).